Here is a 29-residue protein sequence, read N- to C-terminus: Dermaseptin-J5 (29 aa).

Residue Val-29 is modified to Valine amide.

As to expression, expressed by the skin glands.

The protein resides in the secreted. Has antimicrobial activity. In Phasmahyla jandaia (Jandaia leaf frog), this protein is Dermaseptin-J5.